The primary structure comprises 307 residues: DDRGK domain-containing protein 1 (307 aa).

The Lumenal segment spans residues 1–2 (MD). A helical membrane pass occupies residues 3 to 23 (LILLVGIATALLLILITLYFL). Residues 24 to 307 (QSKNAKTETK…TPVAAGESSA (284 aa)) are Cytoplasmic-facing. The interval 31 to 175 (ETKAAAQPQR…EADRLAKEER (145 aa)) is disordered. Residues 52 to 83 (RRAQIARNQRNRLRQNQNAPAVAAAAAPAAAV) are compositionally biased toward low complexity. Over residues 107–175 (LDEKMGAKKR…EADRLAKEER (69 aa)) the composition is skewed to basic and acidic residues.

This sequence belongs to the DDRGK1 family. In terms of assembly, interacts with Atg9; the interaction is transient.

The protein resides in the endoplasmic reticulum membrane. In terms of biological role, substrate adapter for ufmylation, the covalent attachment of the ubiquitin-like modifier UFM1 to substrate proteins. Required for ufmylation of Atg9; protects the nervous system during aging, possibly by stabilizing Atg9 and supporting its function. In Drosophila virilis (Fruit fly), this protein is DDRGK domain-containing protein 1.